Here is a 339-residue protein sequence, read N- to C-terminus: Serine/threonine-protein kinase pdik1l-B (339 aa).

The Protein kinase domain maps to 8-332 (YDLIREVGRG…LELKLIQIAF (325 aa)). ATP contacts are provided by residues 14–22 (VGRGSYGLV) and Lys-37. The active-site Proton acceptor is Asp-164.

This sequence belongs to the protein kinase superfamily. Ser/Thr protein kinase family.

It is found in the nucleus. It carries out the reaction L-seryl-[protein] + ATP = O-phospho-L-seryl-[protein] + ADP + H(+). It catalyses the reaction L-threonyl-[protein] + ATP = O-phospho-L-threonyl-[protein] + ADP + H(+). This chain is Serine/threonine-protein kinase pdik1l-B (pdik1-b), found in Xenopus laevis (African clawed frog).